Consider the following 389-residue polypeptide: Arrestin-C (389 aa).

It belongs to the arrestin family. Retina and pineal gland.

May play a role in an as yet undefined retina-specific signal transduction. Could bind to photoactivated-phosphorylated red/green opsins. The polypeptide is Arrestin-C (arr3) (Lithobates pipiens (Northern leopard frog)).